Consider the following 383-residue polypeptide: Chaperone protein DnaJ (383 aa).

The 66-residue stretch at 5–70 folds into the J domain; that stretch reads DYYEVLGVAK…EKRAAYDRFG (66 aa). The CR-type zinc finger occupies 139 to 217; sequence GKTETIRIPT…CSGAGRVNRE (79 aa). Zn(2+) is bound by residues cysteine 152, cysteine 155, cysteine 169, cysteine 172, cysteine 191, cysteine 194, cysteine 205, and cysteine 208. CXXCXGXG motif repeat units lie at residues 152-159, 169-176, 191-198, and 205-212; these read CEACSGTG, CSTCGGYG, CPNCHGRG, and CTACSGAG.

This sequence belongs to the DnaJ family. In terms of assembly, homodimer. Zn(2+) serves as cofactor.

The protein resides in the cytoplasm. Participates actively in the response to hyperosmotic and heat shock by preventing the aggregation of stress-denatured proteins and by disaggregating proteins, also in an autonomous, DnaK-independent fashion. Unfolded proteins bind initially to DnaJ; upon interaction with the DnaJ-bound protein, DnaK hydrolyzes its bound ATP, resulting in the formation of a stable complex. GrpE releases ADP from DnaK; ATP binding to DnaK triggers the release of the substrate protein, thus completing the reaction cycle. Several rounds of ATP-dependent interactions between DnaJ, DnaK and GrpE are required for fully efficient folding. Also involved, together with DnaK and GrpE, in the DNA replication of plasmids through activation of initiation proteins. The protein is Chaperone protein DnaJ of Methylorubrum populi (strain ATCC BAA-705 / NCIMB 13946 / BJ001) (Methylobacterium populi).